We begin with the raw amino-acid sequence, 690 residues long: Elongation factor G (690 aa).

In terms of domain architecture, tr-type G spans 8 to 283; the sequence is EKYRNIGIMA…AVVDYLPSPL (276 aa). Residues 17 to 24, 81 to 85, and 135 to 138 contribute to the GTP site; these read AHIDAGKT, DTPGH, and NKLD.

This sequence belongs to the TRAFAC class translation factor GTPase superfamily. Classic translation factor GTPase family. EF-G/EF-2 subfamily.

It is found in the cytoplasm. In terms of biological role, catalyzes the GTP-dependent ribosomal translocation step during translation elongation. During this step, the ribosome changes from the pre-translocational (PRE) to the post-translocational (POST) state as the newly formed A-site-bound peptidyl-tRNA and P-site-bound deacylated tRNA move to the P and E sites, respectively. Catalyzes the coordinated movement of the two tRNA molecules, the mRNA and conformational changes in the ribosome. The sequence is that of Elongation factor G from Rhizorhabdus wittichii (strain DSM 6014 / CCUG 31198 / JCM 15750 / NBRC 105917 / EY 4224 / RW1) (Sphingomonas wittichii).